Here is a 529-residue protein sequence, read N- to C-terminus: Cytochrome P450 monooxygenase ausG (529 aa).

Residues 31 to 51 (FLVTCGLPWLLLLFSVTIILF) form a helical membrane-spanning segment. Residue Cys-470 participates in heme binding.

It belongs to the cytochrome P450 family. Heme is required as a cofactor.

It localises to the membrane. Its pathway is secondary metabolite biosynthesis; terpenoid biosynthesis. Functionally, cytochrome P450 monooxygenase; part of the gene cluster B that mediates the biosynthesis of austinol and dehydroaustinol, two fungal meroterpenoids. The first step of the pathway is the synthesis of 3,5-dimethylorsellinic acid by the polyketide synthase ausA. 3,5-dimethylorsellinic acid is then prenylated by the polyprenyl transferase ausN. Further epoxidation by the FAD-dependent monooxygenase ausM and cyclization by the probable terpene cyclase ausL lead to the formation of protoaustinoid A. Protoaustinoid A is then oxidized to spiro-lactone preaustinoid A3 by the combined action of the FAD-binding monooxygenases ausB and ausC, and the dioxygenase ausE. Acid-catalyzed keto-rearrangement and ring contraction of the tetraketide portion of preaustinoid A3 by ausJ lead to the formation of preaustinoid A4. The aldo-keto reductase ausK, with the help of ausH, is involved in the next step by transforming preaustinoid A4 into isoaustinone which is in turn hydroxylated by the P450 monooxygenase ausI to form austinolide. Finally, the cytochrome P450 monooxygenase ausG modifies austinolide to austinol. Austinol can be further modified to dehydroaustinol which forms a diffusible complex with diorcinol that initiates conidiation. Due to genetic rearrangements of the clusters and the subsequent loss of some enzymes, the end products of the Emericella nidulans austinoid biosynthesis clusters are austinol and dehydroaustinol, even if additional enzymes, such as the O-acetyltransferase ausQ and the cytochrome P450 monooxygenase ausR are still functional. The polypeptide is Cytochrome P450 monooxygenase ausG (Emericella nidulans (strain FGSC A4 / ATCC 38163 / CBS 112.46 / NRRL 194 / M139) (Aspergillus nidulans)).